The following is a 39-amino-acid chain: Large ribosomal subunit protein bL12 (39 aa).

The protein belongs to the bacterial ribosomal protein bL12 family. As to quaternary structure, homodimer. Part of the ribosomal stalk of the 50S ribosomal subunit. Forms a multimeric L10(L12)X complex, where L10 forms an elongated spine to which 2 to 4 L12 dimers bind in a sequential fashion. Binds GTP-bound translation factors.

Functionally, forms part of the ribosomal stalk which helps the ribosome interact with GTP-bound translation factors. Is thus essential for accurate translation. The chain is Large ribosomal subunit protein bL12 (rplL) from Arthrobacter glacialis.